The following is a 337-amino-acid chain: Glyceraldehyde-3-phosphate dehydrogenase 2, cytosolic (337 aa).

The segment at 1 to 151 (MGKIKIGING…YTSDVNIVSN (151 aa)) is binding to NAD. NAD(+)-binding positions include 13-14 (RI), Asp35, and Arg82. The catalytic stretch occupies residues 152–337 (ASCTTNCLAP…DLIRHMFKTQ (186 aa)). Residues 153 to 155 (SCT), Thr184, 213 to 214 (TG), and Arg236 contribute to the D-glyceraldehyde 3-phosphate site. Cys154 serves as the catalytic Nucleophile. Asn318 is a binding site for NAD(+).

This sequence belongs to the glyceraldehyde-3-phosphate dehydrogenase family. As to quaternary structure, homotetramer. As to expression, developing seeds, seedling roots and shoots, and embryo.

Its subcellular location is the cytoplasm. It carries out the reaction D-glyceraldehyde 3-phosphate + phosphate + NAD(+) = (2R)-3-phospho-glyceroyl phosphate + NADH + H(+). The protein operates within carbohydrate degradation; glycolysis; pyruvate from D-glyceraldehyde 3-phosphate: step 1/5. Its function is as follows. Key enzyme in glycolysis that catalyzes the first step of the pathway by converting D-glyceraldehyde 3-phosphate (G3P) into 3-phospho-D-glyceroyl phosphate. Essential for the maintenance of cellular ATP levels and carbohydrate metabolism. The polypeptide is Glyceraldehyde-3-phosphate dehydrogenase 2, cytosolic (GAPC2) (Zea mays (Maize)).